Reading from the N-terminus, the 111-residue chain is Iron-sulfur cluster assembly protein CyaY (111 aa).

Belongs to the frataxin family.

Involved in iron-sulfur (Fe-S) cluster assembly. May act as a regulator of Fe-S biogenesis. The chain is Iron-sulfur cluster assembly protein CyaY from Cupriavidus taiwanensis (strain DSM 17343 / BCRC 17206 / CCUG 44338 / CIP 107171 / LMG 19424 / R1) (Ralstonia taiwanensis (strain LMG 19424)).